The sequence spans 387 residues: S-adenosylmethionine synthase (387 aa).

An ATP-binding site is contributed by His-15. A Mg(2+)-binding site is contributed by Asp-17. Residue Glu-43 participates in K(+) binding. L-methionine contacts are provided by Glu-56 and Gln-99. Residues 99 to 109 are flexible loop; sequence QSPDIAQGVNN. ATP is bound by residues 166–168, 232–233, Asp-241, 247–248, Ala-264, and Lys-268; these read DAK, RF, and RK. L-methionine is bound at residue Asp-241. Lys-272 lines the L-methionine pocket.

Belongs to the AdoMet synthase family. Homotetramer; dimer of dimers. It depends on Mg(2+) as a cofactor. The cofactor is K(+).

The protein resides in the cytoplasm. It catalyses the reaction L-methionine + ATP + H2O = S-adenosyl-L-methionine + phosphate + diphosphate. It functions in the pathway amino-acid biosynthesis; S-adenosyl-L-methionine biosynthesis; S-adenosyl-L-methionine from L-methionine: step 1/1. In terms of biological role, catalyzes the formation of S-adenosylmethionine (AdoMet) from methionine and ATP. The overall synthetic reaction is composed of two sequential steps, AdoMet formation and the subsequent tripolyphosphate hydrolysis which occurs prior to release of AdoMet from the enzyme. The protein is S-adenosylmethionine synthase of Methylobacillus flagellatus (strain ATCC 51484 / DSM 6875 / VKM B-1610 / KT).